The following is an 828-amino-acid chain: MKQRSICPGRLSTAIAVALCCFPPFSSGQESPGTIYQFNDGFIVGSREKVDPSRFSTSAISEGVYSLDVYTNGEWKGRYDLKITAGKDGKMGVCYTKAMLMQYGISPEKLNPQLSEKEGFCGRLQEWRHEDNVKDTLIQSSLRLDIAVPQIYEDQRLKNFVSPQFWDKGVAALNLGWMANAWNSHISSANGSDNSSAYLGVNAGLSWDGWLLKHIGNLNWQQQQGKAHWNSNQTYLQRPIPQINSIVSGGQIFTNGEFFDTIGLRGVNLATDDNMFPDGMRSYAPEIRDVAQSNALATVRQGSNIIYQTTVPPGPFTLQDVYPSGYGSDLEVSVKEGDGSVEVFSVPYASVAQLLRPGMTRYALSAGKVDDSSLRNKPMLYQGTWQHGLNNLFTGYTGVTGFDDYQAFLLGTGMNTGIGALSFDVTHTRLKSDTLDEHGQSYRATFNRMFTETQTSIVLAAYRYSTKGYYNLNDALYAVDQEKNYNSNYTVWRQKNGMTFTVNQNLPDGWGGFYLCGRVADYWNRSGTEKQYQFSYNNMYGRLSWSVDAQRVYTPDSSGHRRDDRVSLNFSYPLWFGENRTANLTSNTAFNNSRFASSQIGVNGSLDSENNLNYGVSTTTATGRQHDVALNGSYRTPWTTLNGSYSQGEGYRQSGVGASGTLIAHQHGVVFSPETGPTMALIEAKDAAGVMLPGSPGTRIDSNGYAILPYLRPYRINSVEIDPKGSNDDVAFGSTVAQVVPWEGSVVKVSFDTTLQNNITLRARQANGLPLPFAATIFGPSGKEIGVVGQGSMMFISDASAPKATVKWSGGQCSVELSQEKTKETLCR.

The first 18 residues, 1-18, serve as a signal peptide directing secretion; the sequence is MKQRSICPGRLSTAIAVA. A disulfide bridge links Cys813 with Cys827.

The protein belongs to the fimbrial export usher family.

It localises to the cell outer membrane. Involved in the export and assembly of the type 3 fimbrial subunit (MrkA). This chain is Outer membrane usher protein MrkC (mrkC), found in Klebsiella pneumoniae.